The primary structure comprises 428 residues: Serine--tRNA ligase (428 aa).

Residue Thr-231–Glu-233 coordinates L-serine. Residue Arg-262 to Glu-264 participates in ATP binding. Glu-285 lines the L-serine pocket. Glu-349–Ser-352 serves as a coordination point for ATP. Ser-385 contributes to the L-serine binding site.

Belongs to the class-II aminoacyl-tRNA synthetase family. Type-1 seryl-tRNA synthetase subfamily. As to quaternary structure, homodimer. The tRNA molecule binds across the dimer.

The protein resides in the cytoplasm. The enzyme catalyses tRNA(Ser) + L-serine + ATP = L-seryl-tRNA(Ser) + AMP + diphosphate + H(+). The catalysed reaction is tRNA(Sec) + L-serine + ATP = L-seryl-tRNA(Sec) + AMP + diphosphate + H(+). Its pathway is aminoacyl-tRNA biosynthesis; selenocysteinyl-tRNA(Sec) biosynthesis; L-seryl-tRNA(Sec) from L-serine and tRNA(Sec): step 1/1. Functionally, catalyzes the attachment of serine to tRNA(Ser). Is also able to aminoacylate tRNA(Sec) with serine, to form the misacylated tRNA L-seryl-tRNA(Sec), which will be further converted into selenocysteinyl-tRNA(Sec). This chain is Serine--tRNA ligase, found in Staphylococcus carnosus (strain TM300).